The chain runs to 101 residues: ATP-dependent Clp protease adapter protein ClpS (101 aa).

This sequence belongs to the ClpS family. In terms of assembly, binds to the N-terminal domain of the chaperone ClpA.

Functionally, involved in the modulation of the specificity of the ClpAP-mediated ATP-dependent protein degradation. The polypeptide is ATP-dependent Clp protease adapter protein ClpS (Treponema denticola (strain ATCC 35405 / DSM 14222 / CIP 103919 / JCM 8153 / KCTC 15104)).